Here is a 179-residue protein sequence, read N- to C-terminus: Adenine phosphoribosyltransferase (179 aa).

It belongs to the purine/pyrimidine phosphoribosyltransferase family. As to quaternary structure, homodimer.

The protein resides in the cytoplasm. It catalyses the reaction AMP + diphosphate = 5-phospho-alpha-D-ribose 1-diphosphate + adenine. The protein operates within purine metabolism; AMP biosynthesis via salvage pathway; AMP from adenine: step 1/1. Functionally, catalyzes a salvage reaction resulting in the formation of AMP, that is energically less costly than de novo synthesis. This is Adenine phosphoribosyltransferase from Bradyrhizobium diazoefficiens (strain JCM 10833 / BCRC 13528 / IAM 13628 / NBRC 14792 / USDA 110).